A 313-amino-acid polypeptide reads, in one-letter code: Ribosomal RNA small subunit methyltransferase H (313 aa).

Residues 34-36 (GGH), aspartate 53, phenylalanine 80, aspartate 101, and glutamine 108 contribute to the S-adenosyl-L-methionine site.

Belongs to the methyltransferase superfamily. RsmH family.

Its subcellular location is the cytoplasm. The catalysed reaction is cytidine(1402) in 16S rRNA + S-adenosyl-L-methionine = N(4)-methylcytidine(1402) in 16S rRNA + S-adenosyl-L-homocysteine + H(+). Functionally, specifically methylates the N4 position of cytidine in position 1402 (C1402) of 16S rRNA. The chain is Ribosomal RNA small subunit methyltransferase H from Lacticaseibacillus casei (strain BL23) (Lactobacillus casei).